The chain runs to 352 residues: Ion-translocating oxidoreductase complex subunit D (352 aa).

4 helical membrane passes run 20–40 (IMLLVLLAAVPGIAAQLWFFG), 42–62 (GTLVQILLASVSTLLAEALVL), 89–109 (IPPLAPWWMVVLGTVFAVIIA), and 123–143 (PAMIGYVVLLISFPVQMTSWL). Thr-187 bears the FMN phosphoryl threonine mark. Helical transmembrane passes span 214 to 234 (ILAGAGWQWVNLAWLAGGLWL), 242 to 262 (WHIPLSFLVTLALCATLGWLF), 267 to 287 (LAAPQIHLLSGATMLGAFFIL), 301 to 321 (LIFGALAGLLVWLIRSFGGYP), and 322 to 342 (DGVAFAVLLANITVPLIDYYT).

Belongs to the NqrB/RnfD family. In terms of assembly, the complex is composed of six subunits: RsxA, RsxB, RsxC, RsxD, RsxE and RsxG. The cofactor is FMN.

Its subcellular location is the cell inner membrane. Part of a membrane-bound complex that couples electron transfer with translocation of ions across the membrane. Required to maintain the reduced state of SoxR. This chain is Ion-translocating oxidoreductase complex subunit D, found in Shigella boydii serotype 18 (strain CDC 3083-94 / BS512).